Reading from the N-terminus, the 133-residue chain is Small ribosomal subunit protein uS8 (133 aa).

This sequence belongs to the universal ribosomal protein uS8 family. In terms of assembly, part of the 30S ribosomal subunit.

One of the primary rRNA binding proteins, it binds directly to 16S rRNA central domain where it helps coordinate assembly of the platform of the 30S subunit. In Desulfurococcus amylolyticus (strain DSM 18924 / JCM 16383 / VKM B-2413 / 1221n) (Desulfurococcus kamchatkensis), this protein is Small ribosomal subunit protein uS8.